The following is a 146-amino-acid chain: ATP synthase epsilon chain (146 aa).

Residues 103–124 (QAERELGQLPEEEDEDSRRARE) form a disordered region.

It belongs to the ATPase epsilon chain family. F-type ATPases have 2 components, CF(1) - the catalytic core - and CF(0) - the membrane proton channel. CF(1) has five subunits: alpha(3), beta(3), gamma(1), delta(1), epsilon(1). CF(0) has three main subunits: a, b and c.

It localises to the cell membrane. In terms of biological role, produces ATP from ADP in the presence of a proton gradient across the membrane. The chain is ATP synthase epsilon chain from Rubrobacter xylanophilus (strain DSM 9941 / JCM 11954 / NBRC 16129 / PRD-1).